The primary structure comprises 101 residues: Transcription and mRNA export factor SUS1 (101 aa).

It belongs to the ENY2 family. As to quaternary structure, component of the nuclear pore complex (NPC)-associated TREX-2 complex (transcription and export complex 2), composed of at least SUS1, SAC3, THP1, SEM1, and CDC31. TREX-2 contains 2 SUS1 chains. The TREX-2 complex interacts with the nucleoporin NUP1. Component of the 1.8 MDa SAGA transcription coactivator-HAT complex. SAGA is built of 5 distinct domains with specialized functions. Within the SAGA complex, SUS1, SGF11, SGF73 and UBP8 form an additional subcomplex of SAGA called the DUB module (deubiquitination module). Interacts directly with THP1, SAC3, SGF11, and with the RNA polymerase II.

It is found in the nucleus. It localises to the nucleoplasm. Its subcellular location is the cytoplasm. The protein resides in the P-body. Involved in mRNA export coupled transcription activation by association with both the TREX-2 and the SAGA complexes. At the promoters, SAGA is required for recruitment of the basal transcription machinery. It influences RNA polymerase II transcriptional activity through different activities such as TBP interaction and promoter selectivity, interaction with transcription activators, and chromatin modification through histone acetylation and deubiquitination. Within the SAGA complex, participates in a subcomplex required for deubiquitination of H2B and for the maintenance of steady-state H3 methylation levels. The TREX-2 complex functions in docking export-competent ribonucleoprotein particles (mRNPs) to the nuclear entrance of the nuclear pore complex (nuclear basket). TREX-2 participates in mRNA export and accurate chromatin positioning in the nucleus by tethering genes to the nuclear periphery. May also be involved in cytoplasmic mRNA decay by interaction with components of P-bodies. In Debaryomyces hansenii (strain ATCC 36239 / CBS 767 / BCRC 21394 / JCM 1990 / NBRC 0083 / IGC 2968) (Yeast), this protein is Transcription and mRNA export factor SUS1.